The chain runs to 307 residues: Probable deoxyhypusine synthase (307 aa).

K278 (nucleophile) is an active-site residue.

The protein belongs to the deoxyhypusine synthase family. It depends on NAD(+) as a cofactor.

It carries out the reaction [eIF5A protein]-L-lysine + spermidine = [eIF5A protein]-deoxyhypusine + propane-1,3-diamine. It participates in protein modification; eIF5A hypusination. Functionally, catalyzes the NAD-dependent oxidative cleavage of spermidine and the subsequent transfer of the butylamine moiety of spermidine to the epsilon-amino group of a specific lysine residue of the eIF-5A precursor protein to form the intermediate deoxyhypusine residue. The sequence is that of Probable deoxyhypusine synthase (dys) from Methanothermobacter thermautotrophicus (strain ATCC 29096 / DSM 1053 / JCM 10044 / NBRC 100330 / Delta H) (Methanobacterium thermoautotrophicum).